The sequence spans 103 residues: Large ribosomal subunit protein uL24 (103 aa).

This sequence belongs to the universal ribosomal protein uL24 family. As to quaternary structure, part of the 50S ribosomal subunit.

In terms of biological role, one of two assembly initiator proteins, it binds directly to the 5'-end of the 23S rRNA, where it nucleates assembly of the 50S subunit. Its function is as follows. One of the proteins that surrounds the polypeptide exit tunnel on the outside of the subunit. This chain is Large ribosomal subunit protein uL24, found in Haemophilus ducreyi (strain 35000HP / ATCC 700724).